The sequence spans 628 residues: DNA ligase (628 aa).

NAD(+) contacts are provided by residues 36–40, 85–86, and glutamate 117; these read DVEYD and SL. Catalysis depends on lysine 119, which acts as the N6-AMP-lysine intermediate. Residues arginine 140, glutamate 174, lysine 309, and lysine 333 each contribute to the NAD(+) site. Positions 427, 430, 446, and 452 each coordinate Zn(2+).

The protein belongs to the NAD-dependent DNA ligase family. LigA subfamily. Mg(2+) serves as cofactor. Mn(2+) is required as a cofactor.

The enzyme catalyses NAD(+) + (deoxyribonucleotide)n-3'-hydroxyl + 5'-phospho-(deoxyribonucleotide)m = (deoxyribonucleotide)n+m + AMP + beta-nicotinamide D-nucleotide.. In terms of biological role, DNA ligase that catalyzes the formation of phosphodiester linkages between 5'-phosphoryl and 3'-hydroxyl groups in double-stranded DNA using NAD as a coenzyme and as the energy source for the reaction. It is essential for DNA replication and repair of damaged DNA. The protein is DNA ligase of Tropheryma whipplei (strain TW08/27) (Whipple's bacillus).